Consider the following 92-residue polypeptide: Small ribosomal subunit protein bS20 (92 aa).

The segment at 1-23 (MANTTSAKKATRKIARRTDVNKA) is disordered.

This sequence belongs to the bacterial ribosomal protein bS20 family.

Its function is as follows. Binds directly to 16S ribosomal RNA. This chain is Small ribosomal subunit protein bS20, found in Rhizobium leguminosarum bv. trifolii (strain WSM2304).